The chain runs to 559 residues: Membrane protein insertase YidC (559 aa).

A helical membrane pass occupies residues 6-26; it reads TVLWMIFSFSLLLLWNNWQIH. The interval 34–80 is disordered; it reads GGPSPEQNAPATANNQAATNPASNTPAVPNAPAATSAPSSVPGSTAP. Residues 42–80 show a composition bias toward low complexity; the sequence is APATANNQAATNPASNTPAVPNAPAATSAPSSVPGSTAP. A run of 4 helical transmembrane segments spans residues 367 to 387, 441 to 461, 480 to 500, and 510 to 530; these read LLGN…AVFY, LPMV…LASV, PYFI…KLNP, and VMMV…AGLV.

The protein belongs to the OXA1/ALB3/YidC family. Type 1 subfamily. As to quaternary structure, interacts with the Sec translocase complex via SecD. Specifically interacts with transmembrane segments of nascent integral membrane proteins during membrane integration.

Its subcellular location is the cell inner membrane. Functionally, required for the insertion and/or proper folding and/or complex formation of integral membrane proteins into the membrane. Involved in integration of membrane proteins that insert both dependently and independently of the Sec translocase complex, as well as at least some lipoproteins. Aids folding of multispanning membrane proteins. This is Membrane protein insertase YidC from Bordetella avium (strain 197N).